The primary structure comprises 430 residues: von Willebrand factor (430 aa).

An N-linked (GlcNAc...) asparagine glycan is attached at asparagine 6. Cysteines 9 and 12 form a disulfide. O-linked (GalNAc...) threonine glycosylation is found at threonine 23, threonine 30, and threonine 31. Cysteine 47 and cysteine 233 are oxidised to a cystine. The region spanning 52–228 is the VWFA 1; binding site for platelet glycoprotein Ib domain; it reads DLVFLLDGSY…DELEQRRDEI (177 aa). Threonine 252 is a glycosylation site (O-linked (GalNAc...) threonine). Serine 261 is a glycosylation site (O-linked (GalNAc...) serine). Positions 273-430 constitute a VWFA 2 domain; the sequence is DVVFVLEASD…ITPIFIQDFE (158 aa). Residues asparagine 290 and asparagine 349 are each glycosylated (N-linked (GlcNAc...) asparagine).

As to quaternary structure, multimeric. Interacts with F8. Post-translationally, N- and O-glycosylated. Plasma.

It localises to the secreted. The protein resides in the extracellular space. The protein localises to the extracellular matrix. Its function is as follows. Important in the maintenance of hemostasis, it promotes adhesion of platelets to the sites of vascular injury by forming a molecular bridge between sub-endothelial collagen matrix and platelet-surface receptor complex GPIb-IX-V. Also acts as a chaperone for coagulation factor VIII, delivering it to the site of injury, stabilizing its heterodimeric structure and protecting it from premature clearance from plasma. This chain is von Willebrand factor, found in Rattus norvegicus (Rat).